The chain runs to 253 residues: Ubiquinone/menaquinone biosynthesis C-methyltransferase UbiE (253 aa).

S-adenosyl-L-methionine-binding positions include T76, D97, and 125 to 126 (NA).

This sequence belongs to the class I-like SAM-binding methyltransferase superfamily. MenG/UbiE family.

It carries out the reaction a 2-demethylmenaquinol + S-adenosyl-L-methionine = a menaquinol + S-adenosyl-L-homocysteine + H(+). The catalysed reaction is a 2-methoxy-6-(all-trans-polyprenyl)benzene-1,4-diol + S-adenosyl-L-methionine = a 5-methoxy-2-methyl-3-(all-trans-polyprenyl)benzene-1,4-diol + S-adenosyl-L-homocysteine + H(+). Its pathway is quinol/quinone metabolism; menaquinone biosynthesis; menaquinol from 1,4-dihydroxy-2-naphthoate: step 2/2. It functions in the pathway cofactor biosynthesis; ubiquinone biosynthesis. Methyltransferase required for the conversion of demethylmenaquinol (DMKH2) to menaquinol (MKH2) and the conversion of 2-polyprenyl-6-methoxy-1,4-benzoquinol (DDMQH2) to 2-polyprenyl-3-methyl-6-methoxy-1,4-benzoquinol (DMQH2). The chain is Ubiquinone/menaquinone biosynthesis C-methyltransferase UbiE from Stenotrophomonas maltophilia (strain R551-3).